Reading from the N-terminus, the 141-residue chain is Hemoglobin subunit alpha-A (141 aa).

Residues 1–141 (VLSAADKTNV…VGTVLTAKYR (141 aa)) enclose the Globin domain. An O2-binding site is contributed by His58. Position 87 (His87) interacts with heme b.

Belongs to the globin family. In terms of assembly, heterotetramer of two alpha chains and two beta chains. As to expression, red blood cells.

Its function is as follows. Involved in oxygen transport from the lung to the various peripheral tissues. This chain is Hemoglobin subunit alpha-A (HBAA), found in Turdus merula (Common blackbird).